The sequence spans 232 residues: Putative ABC transporter ATP-binding protein VNG_2317G (232 aa).

One can recognise an ABC transporter domain in the interval 2–231 (LSVRNLVHRY…GALPDAGVRP (230 aa)). 34–41 (GANGSGKT) contributes to the ATP binding site.

The protein belongs to the ABC transporter superfamily.

It is found in the cell membrane. Functionally, probably part of an ABC transporter complex. Responsible for energy coupling to the transport system. In Halobacterium salinarum (strain ATCC 700922 / JCM 11081 / NRC-1) (Halobacterium halobium), this protein is Putative ABC transporter ATP-binding protein VNG_2317G.